Here is a 382-residue protein sequence, read N- to C-terminus: Acetylxylan esterase A (382 aa).

Positions 1–21 (MKSLSFSFLVTLFLYLTLSSA) are cleaved as a signal peptide. Positions 22 to 31 (RTLGKDVNKR) are excised as a propeptide. The segment at 35–307 (GSLQQVTGFG…GAKDMEWFGF (273 aa)) is catalytic. N46 carries an N-linked (GlcNAc...) asparagine glycan. S152 (charge relay system) is an active-site residue. The N-linked (GlcNAc...) asparagine glycan is linked to N194. The tract at residues 308–345 (SGSGSSSTTTASATKTSTTSTTSTKTTSSTSSTTTSST) is ser/Thr-rich linker. The span at 313–345 (SSTTTASATKTSTTSTTSTKTTSSTSSTTTSST) shows a compositional bias: low complexity. A disordered region spans residues 313–346 (SSTTTASATKTSTTSTTSTKTTSSTSSTTTSSTG). Residues 346-382 (GVAAHWGQCGGSGWTGPTVCESGYTCTYSNAWYSQCL) form the CBM1 domain.

This sequence belongs to the carbohydrate esterase 1 (CE1) family. AxeA subfamily. Monomer. Glycosylated.

Its subcellular location is the secreted. It carries out the reaction Deacetylation of xylans and xylo-oligosaccharides.. The protein operates within glycan degradation; xylan degradation. With respect to regulation, inactivated by phenylmethylsulfonylfluorid (PMSF), a specific inhibitor of serine esterases. Its function is as follows. Acetylxylan esterase involved in the hydrolysis of xylan, a major structural heterogeneous polysaccharide found in plant biomass representing the second most abundant polysaccharide in the biosphere, after cellulose. Degrades acetylated xylans by cleaving acetyl side groups from the hetero-xylan backbone. This chain is Acetylxylan esterase A (axeA), found in Talaromyces purpureogenus (Soft rot fungus).